The chain runs to 657 residues: N-acetylgalactosaminyltransferase 7 (657 aa).

Topologically, residues 1-6 are cytoplasmic; the sequence is MRLKIG. A helical; Signal-anchor for type II membrane protein membrane pass occupies residues 7-29; that stretch reads FILRSLLVVGSFLGLVVLWSSLS. The tract at residues 30–66 is disordered; sequence SRPDDPSPLSRMREDRDVNNPLPNRGGNGLAPGDDRF. Over 30-657 the chain is Lumenal; it reads SRPDDPSPLS…KWEMNNIHSV (628 aa). Cystine bridges form between Cys197/Cys435, Cys426/Cys507, Cys545/Cys562, Cys585/Cys600, and Cys625/Cys640. The tract at residues 206–317 is catalytic subdomain A; the sequence is LLTSSVVIVF…VNWYAPLVAP (112 aa). Asp247 and Arg277 together coordinate substrate. Mn(2+) is bound by residues Asp301 and His303. The interval 381–443 is catalytic subdomain B; that stretch reads PYRSPAMAGG…PCSRVGHIYR (63 aa). Residue Trp412 participates in substrate binding. His440 serves as a coordination point for Mn(2+). Arg443 provides a ligand contact to substrate. Positions 532 to 652 constitute a Ricin B-type lectin domain; sequence VEWGEIRGLE…GKMTQKWEMN (121 aa).

The protein belongs to the glycosyltransferase 2 family. GalNAc-T subfamily. Mn(2+) is required as a cofactor. As to expression, highly expressed in sublingual gland. Expressed at lower level in stomach, small intestiine and colon.

The protein localises to the golgi apparatus membrane. It catalyses the reaction L-seryl-[protein] + UDP-N-acetyl-alpha-D-galactosamine = a 3-O-[N-acetyl-alpha-D-galactosaminyl]-L-seryl-[protein] + UDP + H(+). It carries out the reaction L-threonyl-[protein] + UDP-N-acetyl-alpha-D-galactosamine = a 3-O-[N-acetyl-alpha-D-galactosaminyl]-L-threonyl-[protein] + UDP + H(+). Its pathway is protein modification; protein glycosylation. Its function is as follows. Glycopeptide transferase involved in O-linked oligosaccharide biosynthesis, which catalyzes the transfer of an N-acetyl-D-galactosamine residue to an already glycosylated peptide. In contrast to other proteins of the family, it does not act as a peptide transferase that transfers GalNAc onto serine or threonine residue on the protein receptor, but instead requires the prior addition of a GalNAc on a peptide before adding additional GalNAc moieties. Some peptide transferase activity is however not excluded, considering that its appropriate peptide substrate may remain unidentified. This chain is N-acetylgalactosaminyltransferase 7 (Galnt7), found in Rattus norvegicus (Rat).